Reading from the N-terminus, the 100-residue chain is Large ribosomal subunit protein bL27 (100 aa).

The propeptide occupies 1 to 9 (MIIMNLQIF). The segment at 13 to 32 (KGMGSSKNGRDSESKRLGTK) is disordered.

The protein belongs to the bacterial ribosomal protein bL27 family. In terms of processing, the N-terminus is cleaved by ribosomal processing cysteine protease Prp.

The protein is Large ribosomal subunit protein bL27 of Clostridium kluyveri (strain ATCC 8527 / DSM 555 / NBRC 12016 / NCIMB 10680 / K1).